A 412-amino-acid polypeptide reads, in one-letter code: Multifunctional CCA protein (412 aa).

G8 and R11 together coordinate ATP. Residues G8 and R11 each contribute to the CTP site. The Mg(2+) site is built by D21 and D23. Residues R91, R137, and R140 each contribute to the ATP site. Residues R91, R137, and R140 each coordinate CTP. One can recognise an HD domain in the interval 228-329 (TGIHTLMTLS…VKLFDSIDAW (102 aa)).

It belongs to the tRNA nucleotidyltransferase/poly(A) polymerase family. Bacterial CCA-adding enzyme type 1 subfamily. In terms of assembly, monomer. Can also form homodimers and oligomers. Mg(2+) is required as a cofactor. Ni(2+) serves as cofactor.

It catalyses the reaction a tRNA precursor + 2 CTP + ATP = a tRNA with a 3' CCA end + 3 diphosphate. The enzyme catalyses a tRNA with a 3' CCA end + 2 CTP + ATP = a tRNA with a 3' CCACCA end + 3 diphosphate. Functionally, catalyzes the addition and repair of the essential 3'-terminal CCA sequence in tRNAs without using a nucleic acid template. Adds these three nucleotides in the order of C, C, and A to the tRNA nucleotide-73, using CTP and ATP as substrates and producing inorganic pyrophosphate. tRNA 3'-terminal CCA addition is required both for tRNA processing and repair. Also involved in tRNA surveillance by mediating tandem CCA addition to generate a CCACCA at the 3' terminus of unstable tRNAs. While stable tRNAs receive only 3'-terminal CCA, unstable tRNAs are marked with CCACCA and rapidly degraded. This chain is Multifunctional CCA protein, found in Shigella sonnei (strain Ss046).